We begin with the raw amino-acid sequence, 218 residues long: uncharacterized protein (218 aa).

The next 5 helical transmembrane spans lie at I28–L48, F66–L86, L92–L112, M122–C142, and I173–F193.

It localises to the cell membrane. This is an uncharacterized protein from Haemophilus influenzae (strain ATCC 51907 / DSM 11121 / KW20 / Rd).